The chain runs to 350 residues: MRLPDVQLWLVLLWALVRAQGTGSVCPSCGGSKLAPQAERALVLELAKQQILDGLHLTSRPRITHPPPQAALTRALRRLQPGSVAPGNGEEVISFATVTDSTSAYSSLLTFHLSTPRSHHLYHARLWLHVLPTLPGTLCLRIFRWGPRRRRQGSRTLLAEHHITNLGWHTLTLPSSGLRGEKSGVLKLQLDCRPLEGNSTVTGQPRRLLDTAGHQQPFLELKIRANEPGAGRARRRTPTCEPATPLCCRRDHYVDFQELGWRDWILQPEGYQLNYCSGQCPPHLAGSPGIAASFHSAVFSLLKANNPWPASTSCCVPTARRPLSLLYLDHNGNVVKTDVPDMVVEACGCS.

A signal peptide spans 1 to 19 (MRLPDVQLWLVLLWALVRA). Residues 20–236 (QGTGSVCPSC…EPGAGRARRR (217 aa)) constitute a propeptide that is removed on maturation. A glycan (N-linked (GlcNAc...) asparagine) is linked at Asn-198. Disulfide bonds link Cys-240-Cys-248, Cys-247-Cys-315, Cys-276-Cys-347, and Cys-280-Cys-349.

Belongs to the TGF-beta family. As to quaternary structure, homodimeric or heterodimeric through association with alpha and beta subunits, linked by one or more disulfide bonds. Inhibins are heterodimers of one alpha and one beta subunit. Activins are homo- or heterodimers of beta subunits only.

It localises to the secreted. Functionally, inhibins and activins inhibit and activate, respectively, the secretion of follitropin by the pituitary gland. Inhibins/activins are involved in regulating a number of diverse functions such as hypothalamic and pituitary hormone secretion, gonadal hormone secretion, germ cell development and maturation, erythroid differentiation, insulin secretion, nerve cell survival, embryonic axial development or bone growth, depending on their subunit composition. Inhibins appear to oppose the functions of activins. Activin E is a homodimer of INHBE secreted by the liver that plays a crucial role in regulating metabolic homeostasis particularly in lipid metabolism and energy homeostasis. Plays a central role in the regulation of adipose tissue lipolysis by preventing the influx of fatty acids from adipose tissue into the liver. Mechanistically, signals via ACVR1C to activate SMAD2/3 signaling, suppressing PPARG target genes in adipose tissue, thereby reducing liver lipid content and improving glycemic control. Induces beige adipocyte formation and thermogenesis in response to cold exposure. The sequence is that of Inhibin beta E chain (INHBE) from Homo sapiens (Human).